A 149-amino-acid chain; its full sequence is Stem-specific protein TSJT1 (149 aa).

Stem-specific (active at lower levels in other organs).

The sequence is that of Stem-specific protein TSJT1 (TSJT1) from Nicotiana tabacum (Common tobacco).